The chain runs to 378 residues: UPF0754 membrane protein BCA_0919 (378 aa).

2 consecutive transmembrane segments (helical) span residues 1-21 and 357-377; these read MNIWLSMLTTTGLGAIIGGFT and YLGALLGGMIGIVQGLLLLFL.

The protein belongs to the UPF0754 family.

The protein localises to the cell membrane. This Bacillus cereus (strain 03BB102) protein is UPF0754 membrane protein BCA_0919.